Reading from the N-terminus, the 286-residue chain is ATP synthase gamma chain (286 aa).

The protein belongs to the ATPase gamma chain family. In terms of assembly, F-type ATPases have 2 components, CF(1) - the catalytic core - and CF(0) - the membrane proton channel. CF(1) has five subunits: alpha(3), beta(3), gamma(1), delta(1), epsilon(1). CF(0) has three main subunits: a, b and c.

It localises to the cell inner membrane. In terms of biological role, produces ATP from ADP in the presence of a proton gradient across the membrane. The gamma chain is believed to be important in regulating ATPase activity and the flow of protons through the CF(0) complex. This chain is ATP synthase gamma chain, found in Marinomonas sp. (strain MWYL1).